A 563-amino-acid chain; its full sequence is Rab escort protein 1 (563 aa).

Positions 538–563 are disordered; sequence ELFKEETSPAENTTEEENDGGVEIED. Residues 550-563 show a composition bias toward acidic residues; sequence TTEEENDGGVEIED.

Belongs to the Rab GDI family. Heterotrimer composed of the alpha subunit RGTA, the beta subunit RGTB and REP; within this trimer, RGTA and RGTB form the catalytic component, while REP mediates peptide substrate binding. Expressed in roots, leaves and flowers.

The protein localises to the cytoplasm. Substrate-binding subunit of the Rab geranylgeranyltransferase (GGTase) complex. Binds unprenylated Rab proteins and presents the substrate peptide to the catalytic component composed of the alpha subunit RGTA and the beta subunit RGTB. Preferentially binds the GDP-bound form of Rab and stimulates geranylgeranylation of various Rab GTPases in vitro. This Arabidopsis thaliana (Mouse-ear cress) protein is Rab escort protein 1.